A 140-amino-acid polypeptide reads, in one-letter code: Protein SamA (140 aa).

Residues S61 and K98 each act as for autocatalytic cleavage activity in the active site.

This sequence belongs to the peptidase S24 family.

Its function is as follows. Involved in UV protection and mutation. In Salmonella typhimurium (strain LT2 / SGSC1412 / ATCC 700720), this protein is Protein SamA (samA).